A 47-amino-acid chain; its full sequence is Delta-halcutoxin-Hcg1a (47 aa).

Disulfide bonds link cysteine 3–cysteine 43, cysteine 5–cysteine 33, and cysteine 26–cysteine 44.

This sequence belongs to the sea anemone sodium channel inhibitory toxin family. Type II subfamily.

The protein resides in the secreted. It is found in the nematocyst. Is potently lethal to crabs, although it showed neither lethal activity in mice nor hemolytic activity. May bind to voltage-gated sodium channels (Nav), thereby delaying their inactivation during signal transduction. This Isohalcurias carlgreni (Sea anemone) protein is Delta-halcutoxin-Hcg1a.